Here is a 92-residue protein sequence, read N- to C-terminus: Small ribosomal subunit protein uS19 (92 aa).

Belongs to the universal ribosomal protein uS19 family.

Functionally, protein S19 forms a complex with S13 that binds strongly to the 16S ribosomal RNA. This Enterococcus faecalis (strain ATCC 700802 / V583) protein is Small ribosomal subunit protein uS19.